A 318-amino-acid chain; its full sequence is Probable cell division protein WhiA (318 aa).

The segment at residues 281-314 is a DNA-binding region (H-T-H motif); sequence SLKELGQMLVPPVGKSGVNHRLRKIEEISKKLKE.

This sequence belongs to the WhiA family.

Involved in cell division and chromosome segregation. This is Probable cell division protein WhiA from Thermoanaerobacter sp. (strain X514).